We begin with the raw amino-acid sequence, 486 residues long: MSNSNTPRKFSEKIAILERKQNEENTTFEDIMRQVQSITHHPTDSSGSSTATAPMPIPQQGLLPPQQPWGHNLGGSLPNVHQMPSYSPPQWPPNWQHEIQHRPIQGHRSRSPEDHMIGSASGSPSHHYHPYGMRSNGLSRSPDRTPPQHPQYTPYGPPYNQPGQLVPPESWNQINRARSDPAIHNMGGMVPMHPHHHQQQQMAFHQMPHYLQNSMPGPSGMMAPNSQSQQHSPQLTPQGSQQGSPVQMHHQIPPPLQMGNNQQMGGGNNGMSPLQSPNHMMTPMYGYHNGSPLHSPMDSPHASTLMLDGSGTPSPYMEVSPPGMHDFNQDAGSLPNLQNVQQQQQQQQEIYTNGGAPGGGYYHAPIGPRHSTGACGPRLVPGPALTPESQSAPTSPHNQLDPNQPPMWPTRTFSNSPEALDIPKLTITNAEGAPGHHVDSYNDFNDLGLDSLDSVLCNGAPPQTISNHQTPNNSFHDPGGTQMLQN.

A disordered region spans residues 1–62; the sequence is MSNSNTPRKF…APMPIPQQGL (62 aa). Basic and acidic residues predominate over residues 9 to 23; that stretch reads KFSEKIAILERKQNE. Polar residues predominate over residues 34-52; it reads QVQSITHHPTDSSGSSTAT. Ser76 bears the Phosphoserine; by AMPK mark. Positions 103-166 are disordered; the sequence is PIQGHRSRSP…PPYNQPGQLV (64 aa). Over residues 144 to 160 the composition is skewed to pro residues; the sequence is RTPPQHPQYTPYGPPYN. Ser179 carries the phosphoserine; by AMPK modification. 3 disordered regions span residues 214–278, 327–417, and 460–486; these read SMPG…QSPN, FNQD…SNSP, and APPQ…MLQN. Polar residues-rich tracts occupy residues 224–245, 387–402, and 461–475; these read PNSQ…QGSP, PESQ…QLDP, and PPQT…NNSF.

This sequence belongs to the TORC family. In terms of assembly, interacts with crh-1. In terms of processing, phosphorylated by AMPK at Ser-76 and Ser-179. Dephosphorylated by tax-6, the catalytic subunit of calcineurin. As to expression, expressed throughout the intestine and in head and tail neurons. Expressed in octopaminergic RIC neurons.

The protein localises to the nucleus. Its subcellular location is the cytoplasm. It localises to the cytosol. In terms of biological role, transcriptional coactivator for crh-1, the homolog of vertebrate transcription factor CREB1. Regulates the transcription of metabolic genes and may have a role in mitochondrial dynamics and metabolism. Involved in modulation of lifespan. Through crh-1, counteracts the pro-lifespan-extension signals of AMPK both cell autonomously and, when expressed in neurons, at a systemic level, possibly using the catecholamine analog, octopamine, as a messenger. The polypeptide is CREB-regulated transcription coactivator 1 homolog (Caenorhabditis elegans).